We begin with the raw amino-acid sequence, 277 residues long: F41 fimbrial protein (277 aa).

A signal peptide spans 1–22 (MKKTLIALAVAASAAVSGSVMA).

Belongs to the fimbrial K88 protein family.

It is found in the fimbrium. In terms of biological role, fimbriae (also called pili), polar filaments radiating from the surface of the bacterium to a length of 0.5-1.5 micrometers and numbering 100-300 per cell, enable bacteria to colonize the epithelium of specific host organs. This chain is F41 fimbrial protein (FimF41a), found in Escherichia coli.